We begin with the raw amino-acid sequence, 215 residues long: Glutathione S-transferase F10 (215 aa).

The region spanning 2 to 81 is the GST N-terminal domain; that stretch reads VLTIYAPLFA…YIAEKYRSQG (80 aa). Residues 11–12, 39–40, 52–53, and 65–66 each bind glutathione; these read AS, QR, KI, and ES. In terms of domain architecture, GST C-terminal spans 88-215; that stretch reads TIEERGQVEQ…EVSAKYSLPV (128 aa).

The protein belongs to the GST superfamily. Phi family. Interacts with BAK1. In terms of tissue distribution, expressed in roots, stems, floral buds, mature flowers and leaves.

It localises to the cytoplasm. The protein localises to the cytosol. The enzyme catalyses RX + glutathione = an S-substituted glutathione + a halide anion + H(+). Functionally, in vitro, possesses glutathione S-transferase activity toward 1-chloro-2,4-dinitrobenzene (CDNB) and benzyl isothiocyanate (BITC). May be involved in the conjugation of reduced glutathione to a wide number of exogenous and endogenous hydrophobic electrophiles and have a detoxification role against certain herbicides. This is Glutathione S-transferase F10 from Arabidopsis thaliana (Mouse-ear cress).